We begin with the raw amino-acid sequence, 455 residues long: Venom prothrombin activator hopsarin-D (455 aa).

An N-terminal signal peptide occupies residues 1-20 (MAPQLLLCLILTFLWSVPEA). Positions 21–40 (ESNVFLKSKVANRFLQRTKR) are excised as a propeptide. Positions 41-86 (SNSLFEEIRPGNIERECIEEKCSKEEAREVFEDNEKTETFWNVYVD) constitute a Gla domain. 4-carboxyglutamate is present on residues Glu-46, Glu-47, Glu-54, Glu-56, Glu-59, Glu-60, Glu-65, Glu-66, Glu-69, Glu-72, and Glu-75. Cys-57 and Cys-62 are joined by a disulfide. The EGF-like 1; calcium-binding domain occupies 86–121 (DGDQCSSNPCHYHGTCKDGIGSYTCTCLPNYEGKNC). 10 disulfides stabilise this stretch: Cys-90–Cys-101, Cys-95–Cys-110, Cys-112–Cys-121, Cys-129–Cys-140, Cys-136–Cys-149, Cys-151–Cys-164, Cys-172–Cys-328, Cys-236–Cys-252, Cys-376–Cys-390, and Cys-401–Cys-429. Ser-92 is a glycosylation site (O-linked (Hex...) serine). The EGF-like 2 domain occupies 129-164 (CRAFNGNCWHFCKRVQSETQCSCAESYRLGVDGHSC). The propeptide at 182 to 209 (REASLPDFVQSQKATLLKKSDNPSPDIR) is activation peptide. The Peptidase S1 domain maps to 210–453 (IVNGMDSKLG…FIPWIKKIMS (244 aa)). His-251 serves as the catalytic Charge relay system. N-linked (GlcNAc...) asparagine glycosylation is present at Asn-254. Asp-308 functions as the Charge relay system in the catalytic mechanism. Ser-405 (charge relay system) is an active-site residue.

The protein belongs to the peptidase S1 family. Snake venom subfamily. As to quaternary structure, heterodimer of a light chain and a heavy chain; disulfide-linked. In terms of processing, the vitamin K-dependent, enzymatic carboxylation of some glutamate residues allows the modified protein to bind calcium. As to expression, expressed by the venom gland.

Its subcellular location is the secreted. The catalysed reaction is Selective cleavage of Arg-|-Thr and then Arg-|-Ile bonds in prothrombin to form thrombin.. Functionally, snake prothrombin activator that attacks the hemostatic system of prey. This protein is functionally similar to blood coagulation factor Xa. The procoagulant activity of hopsarin-D is approximately 10-fold lower than that of trocarin-D and FXa. The chain is Venom prothrombin activator hopsarin-D from Hoplocephalus stephensii (Stephens's banded snake).